Consider the following 494-residue polypeptide: ATP synthase subunit beta, plastid (494 aa).

169-176 (GGAGVGKT) provides a ligand contact to ATP.

It belongs to the ATPase alpha/beta chains family. F-type ATPases have 2 components, CF(1) - the catalytic core - and CF(0) - the membrane proton channel. CF(1) has five subunits: alpha(3), beta(3), gamma(1), delta(1), epsilon(1). CF(0) has four main subunits: a(1), b(1), b'(1) and c(9-12).

Its subcellular location is the plastid thylakoid membrane. The catalysed reaction is ATP + H2O + 4 H(+)(in) = ADP + phosphate + 5 H(+)(out). Produces ATP from ADP in the presence of a proton gradient across the membrane. The catalytic sites are hosted primarily by the beta subunits. The polypeptide is ATP synthase subunit beta, plastid (atpB) (Cuscuta gronovii (Common dodder)).